The chain runs to 567 residues: Microtubule-associated protein 70-1 (567 aa).

A coiled-coil region spans residues 38–341; it reads VRVELTRLEN…AARSEAQLKD (304 aa). The tract at residues 220 to 440 is required for targeting to microtubules; the sequence is ILDRMHRQKV…SGMNVSTDSS (221 aa). 2 disordered regions span residues 425-457 and 534-567; these read KGHVNGSGMNVSTDSSEDKESNNSDEKANEFTS and LEKEQDNKAKRFGSSSSQLPPGRTLPRSGSARNM. A compositionally biased stretch (basic and acidic residues) spans 440–453; it reads SEDKESNNSDEKAN. A coiled-coil region spans residues 516–545; that stretch reads KKRRMEVAAMEKEMAALRLEKEQDNKAKRF.

It belongs to the MAP70 family.

The protein resides in the cytoplasm. The protein localises to the cytoskeleton. Its function is as follows. Plant-specific protein that interact with microtubules. This is Microtubule-associated protein 70-1 (MAP70.1) from Oryza sativa subsp. japonica (Rice).